The primary structure comprises 195 residues: Probable serine/threonine-protein kinase BUD32 homolog (195 aa).

Residues 1–195 (MKVYLGGEAE…GRYVERVSMG (195 aa)) form the Protein kinase domain. Lys-12 is a binding site for ATP. Asp-107 functions as the Proton acceptor in the catalytic mechanism.

Belongs to the protein kinase superfamily. Tyr protein kinase family. BUD32 subfamily.

The protein resides in the cytoplasm. The catalysed reaction is L-seryl-[protein] + ATP = O-phospho-L-seryl-[protein] + ADP + H(+). It carries out the reaction L-threonyl-[protein] + ATP = O-phospho-L-threonyl-[protein] + ADP + H(+). Functionally, could be involved in the formation of a threonylcarbamoyl group on adenosine at position 37 (t(6)A37) in tRNAs that read codons beginning with adenine. The chain is Probable serine/threonine-protein kinase BUD32 homolog from Archaeoglobus fulgidus (strain ATCC 49558 / DSM 4304 / JCM 9628 / NBRC 100126 / VC-16).